We begin with the raw amino-acid sequence, 212 residues long: TATA-box-binding protein 2 (212 aa).

A run of 2 repeats spans residues 30-114 and 120-201.

This sequence belongs to the TBP family. As to quaternary structure, belongs to the TFIID complex together with the TBP-associated factors (TAFs). Binds DNA as monomer.

The protein resides in the nucleus. Its function is as follows. General transcription factor that functions at the core of the DNA-binding multiprotein factor TFIID. Binding of TFIID to the TATA box is the initial transcriptional step of the pre-initiation complex (PIC), playing a role in the activation of eukaryotic genes transcribed by RNA polymerase II. The sequence is that of TATA-box-binding protein 2 from Entamoeba histolytica (strain ATCC 30459 / HM-1:IMSS / ABRM).